A 224-amino-acid polypeptide reads, in one-letter code: Uridylate kinase (224 aa).

ATP is bound at residue 6 to 10; it reads KVTGK. Gly-41 contacts UMP. Positions 42 and 46 each coordinate ATP. Residues Asp-63 and 111–117 contribute to the UMP site; that span reads FQPGQST. 3 residues coordinate ATP: Thr-137, Phe-143, and Asp-146.

This sequence belongs to the UMP kinase family. As to quaternary structure, homohexamer.

The protein localises to the cytoplasm. The catalysed reaction is UMP + ATP = UDP + ADP. Its pathway is pyrimidine metabolism; CTP biosynthesis via de novo pathway; UDP from UMP (UMPK route): step 1/1. Inhibited by UTP. Catalyzes the reversible phosphorylation of UMP to UDP. The sequence is that of Uridylate kinase from Metallosphaera sedula (strain ATCC 51363 / DSM 5348 / JCM 9185 / NBRC 15509 / TH2).